Consider the following 199-residue polypeptide: N-(5'-phosphoribosyl)anthranilate isomerase (199 aa).

The protein belongs to the TrpF family.

The enzyme catalyses N-(5-phospho-beta-D-ribosyl)anthranilate = 1-(2-carboxyphenylamino)-1-deoxy-D-ribulose 5-phosphate. Its pathway is amino-acid biosynthesis; L-tryptophan biosynthesis; L-tryptophan from chorismate: step 3/5. This is N-(5'-phosphoribosyl)anthranilate isomerase from Clostridium kluyveri (strain NBRC 12016).